A 363-amino-acid polypeptide reads, in one-letter code: NAD(P)H-quinone oxidoreductase subunit 1, chloroplastic (363 aa).

Helical transmembrane passes span 26 to 46 (IIWVLIPIFTPVLGITIGVLV), 98 to 118 (FSIGPSIAVISILLSYLVIPF), 127 to 147 (LSIGVFLWIAISSIAPVGLLM), 253 to 273 (FGLFYVASYLNLLVSSLFVTV), 300 to 320 (VFGTIIGIFITLAKTYLFLFI), and 336 to 356 (LLNLGWKFLLPISLGNLLLTT).

It belongs to the complex I subunit 1 family. In terms of assembly, NDH is composed of at least 16 different subunits, 5 of which are encoded in the nucleus.

It is found in the plastid. The protein localises to the chloroplast thylakoid membrane. It catalyses the reaction a plastoquinone + NADH + (n+1) H(+)(in) = a plastoquinol + NAD(+) + n H(+)(out). The enzyme catalyses a plastoquinone + NADPH + (n+1) H(+)(in) = a plastoquinol + NADP(+) + n H(+)(out). Its function is as follows. NDH shuttles electrons from NAD(P)H:plastoquinone, via FMN and iron-sulfur (Fe-S) centers, to quinones in the photosynthetic chain and possibly in a chloroplast respiratory chain. The immediate electron acceptor for the enzyme in this species is believed to be plastoquinone. Couples the redox reaction to proton translocation, and thus conserves the redox energy in a proton gradient. This is NAD(P)H-quinone oxidoreductase subunit 1, chloroplastic from Helianthus annuus (Common sunflower).